The following is a 398-amino-acid chain: Acetate kinase (398 aa).

Asn-7 lines the Mg(2+) pocket. An ATP-binding site is contributed by Lys-14. Arg-91 lines the substrate pocket. Asp-148 functions as the Proton donor/acceptor in the catalytic mechanism. Residues 208–212 (HLGNG), 283–285 (DFR), and 331–335 (GLGEN) contribute to the ATP site. A Mg(2+)-binding site is contributed by Glu-384.

The protein belongs to the acetokinase family. As to quaternary structure, homodimer. Requires Mg(2+) as cofactor. Mn(2+) serves as cofactor.

It localises to the cytoplasm. It catalyses the reaction acetate + ATP = acetyl phosphate + ADP. It participates in metabolic intermediate biosynthesis; acetyl-CoA biosynthesis; acetyl-CoA from acetate: step 1/2. Catalyzes the formation of acetyl phosphate from acetate and ATP. Can also catalyze the reverse reaction. In Natranaerobius thermophilus (strain ATCC BAA-1301 / DSM 18059 / JW/NM-WN-LF), this protein is Acetate kinase.